A 404-amino-acid chain; its full sequence is UPF0261 protein CTC_01794 (404 aa).

This sequence belongs to the UPF0261 family.

The polypeptide is UPF0261 protein CTC_01794 (Clostridium tetani (strain Massachusetts / E88)).